The following is a 529-amino-acid chain: MATPDVSVHMEEVVVVTTPDTAVDGSGVEEVKTVLVTTNLAPHGGDLTEDNMETENAAAAACAFTASSQLKEAVLVKMAEEGENLEAEIVYPITCGDSRANLIWRKFVCPGINVKCVQYDEHVISPKEFVHLAGKSTLKDWKRAIRMNGIMLRKIMDSGELDFYQHDKVCSNTCRSTKIDLSGARVSLSSPTSTEYIPLTPAAADVNGSPATITIETCEDPGDWTTTIGDDTFAFWRGLKDAGLLDEVIQEFQQELEETMKGLQQRVQDPPLQLRDAVLLNNIVQNFGMLDLVKKVLASHKCQMDRSREQYARDLAALEQQCDEHRRRAKELKHKSQHLSNVLMTLTPVSLPSPMKRPRLARATSGPAAMASQVLTQSAQIALGPGMPMSQLTSVPLGKVVSTLPSTVLGKGSPQAAPASSPASPLLGGYTVLASSGSTFPSTVEIHPDTSSLTVLSTAAMQDGTTVLKVVSPLQLLTLPGLGPTLQNVAQASPAGSTIVTMPTAAATGPEEHTATIEVAAVAEDHEQK.

Residues 80–162 (EEGENLEAEI…RKIMDSGELD (83 aa)) form the SAND domain. Cys109 lines the Zn(2+) pocket. DNA is bound by residues Lys135, Lys139, Lys142, and Arg153. A Glycyl lysine isopeptide (Lys-Gly) (interchain with G-Cter in SUMO1); alternate cross-link involves residue Lys154. A Glycyl lysine isopeptide (Lys-Gly) (interchain with G-Cter in SUMO2); alternate cross-link involves residue Lys154. 3 residues coordinate Zn(2+): His166, Cys170, and Cys174. A coiled-coil region spans residues 244-347 (LLDEVIQEFQ…HLSNVLMTLT (104 aa)). Ser372 bears the Phosphoserine mark.

In terms of assembly, homodimer, and heterodimer of GMEB1 and GMEB2. Interacts with the glucocorticoid receptor (NR3C1). May interact with CREB-binding protein (CBP).

It is found in the nucleus. The protein localises to the cytoplasm. Trans-acting factor that binds to glucocorticoid modulatory elements (GME) present in the TAT (tyrosine aminotransferase) promoter and increases sensitivity to low concentrations of glucocorticoids. Also binds to the transferrin receptor promoter. This chain is Glucocorticoid modulatory element-binding protein 2 (Gmeb2), found in Rattus norvegicus (Rat).